The chain runs to 333 residues: Ornithine carbamoyltransferase (333 aa).

Residues 57-60, Arg108, and 135-138 each bind carbamoyl phosphate; these read STRT and HPTQ. L-ornithine is bound by residues Asn168, Asp232, and 236 to 237; that span reads SM. Residues 274–275 and Arg319 each bind carbamoyl phosphate; that span reads CL.

It belongs to the aspartate/ornithine carbamoyltransferase superfamily. OTCase family.

The protein localises to the cytoplasm. It catalyses the reaction carbamoyl phosphate + L-ornithine = L-citrulline + phosphate + H(+). Its pathway is amino-acid degradation; L-arginine degradation via ADI pathway; carbamoyl phosphate from L-arginine: step 2/2. Its function is as follows. Reversibly catalyzes the transfer of the carbamoyl group from carbamoyl phosphate (CP) to the N(epsilon) atom of ornithine (ORN) to produce L-citrulline. This Pediococcus pentosaceus (strain ATCC 25745 / CCUG 21536 / LMG 10740 / 183-1w) protein is Ornithine carbamoyltransferase.